The chain runs to 142 residues: Large ribosomal subunit protein uL13 (142 aa).

Belongs to the universal ribosomal protein uL13 family. Part of the 50S ribosomal subunit.

Its function is as follows. This protein is one of the early assembly proteins of the 50S ribosomal subunit, although it is not seen to bind rRNA by itself. It is important during the early stages of 50S assembly. The polypeptide is Large ribosomal subunit protein uL13 (Mannheimia succiniciproducens (strain KCTC 0769BP / MBEL55E)).